The primary structure comprises 119 residues: Protein phosphatase EYA4 (119 aa).

Belongs to the HAD-like hydrolase superfamily. EYA family. Mg(2+) is required as a cofactor.

It is found in the cytoplasm. Its subcellular location is the nucleus. The enzyme catalyses O-phospho-L-tyrosyl-[protein] + H2O = L-tyrosyl-[protein] + phosphate. Functionally, tyrosine phosphatase that specifically dephosphorylates 'Tyr-142' of histone H2AX (H2AXY142ph). 'Tyr-142' phosphorylation of histone H2AX plays a central role in DNA repair and acts as a mark that distinguishes between apoptotic and repair responses to genotoxic stress. Promotes efficient DNA repair by dephosphorylating H2AX, promoting the recruitment of DNA repair complexes containing MDC1. Its function as histone phosphatase probably explains its role in transcription regulation during organogenesis. May be involved in development of the eye. The polypeptide is Protein phosphatase EYA4 (eya4) (Takifugu rubripes (Japanese pufferfish)).